The chain runs to 561 residues: MAEAVWSTDTGEAVYRSRDPVRNLRLRVHLQRITSSNFLHYQPAAQMGKDLIDLATFKPPQAASGHRPDEEEEEEVIIGWQEKLFSQFEVDLYQNESACQSPLDHQYRQEVLKLENSGGRKNRRIFTYTDSDRYTDLEEYCQKITTSAGEAPSFLVERMANVRRRRQDRRGVEGSKLKSRIITWEPSEDFIRNSHAINTPLQTMYIMADLGPYGKLGYKIHEHVLCVLKVDSNGVITVKPDFTGIKGPYRIETEGEKQEHTSAWKYTIDNVSSLAQPEEEEREQRVFKDLYGRHKEYLSSLVGTDFEMIAPGALRLFVNGEVVSARGYEHDNLYVHFFVELPATNWSSPSFQQLSGVTQTCVTRSLGMDKVAYFSFPFTFEAFFLHEDESDESLPEWPVLYCKVLSLDFWQRYRVEGYGAVVLPVTPGSHTLTASTWRPMELGLVAELRRFFIGGSLELEDPSYVRIPGTFKGERLSRFGFRTETTGTVTFRLHCLQQSRAFMESNSLRKQMRSVLDRLEGFSQQSSTHNVLEAFRRARRRMQEARESLPQDLVSPTGTLA.

The C2 B9-type domain occupies 314–442 (LRLFVNGEVV…TASTWRPMEL (129 aa)).

In terms of assembly, part of the tectonic-like complex (also named B9 complex). Interacts with TMEM107. Interacts with TCTN3, AHI1, TCTN1, TCTN2, CC2D2A. Interacts with FLNA. Interacts with TMEM67. Interacts with B9D1 and B9D2.

The protein resides in the cytoplasm. Its subcellular location is the cytoskeleton. It localises to the cilium basal body. The protein localises to the microtubule organizing center. It is found in the centrosome. Component of the tectonic-like complex, a complex localized at the transition zone of primary cilia and acting as a barrier that prevents diffusion of transmembrane proteins between the cilia and plasma membranes. Involved in centrosome migration to the apical cell surface during early ciliogenesis. Required for ciliary structure and function, including a role in regulating length and appropriate number through modulating centrosome duplication. Required for cell branching morphology. This is Tectonic-like complex member MKS1 (Mks1) from Rattus norvegicus (Rat).